Reading from the N-terminus, the 594-residue chain is Dictomallein-4 (594 aa).

An N-terminal signal peptide occupies residues 1 to 18; sequence MKLVLIFLIINFLLIINC. The Peptidase M66 domain maps to 147-408; it reads PDVSQDYTLK…QNYFKNSIYY (262 aa). His300 provides a ligand contact to Zn(2+). Residue Glu301 is part of the active site. His304 and His310 together coordinate Zn(2+).

It belongs to the dictomallein family. Zn(2+) serves as cofactor.

Its subcellular location is the secreted. This Dictyostelium discoideum (Social amoeba) protein is Dictomallein-4 (dtmlD).